The following is a 204-amino-acid chain: Casparian strip membrane protein 3 (204 aa).

Topologically, residues 1–41 (MKNESTFIDVPADSSSAMKGKAPLIGVAKDHTASGSGGYNR) are cytoplasmic. A helical transmembrane segment spans residues 42–62 (GLSIFDFLLRLAAIVAASVAA). The Extracellular portion of the chain corresponds to 63–92 (GTMFTSDETLPFFTQFLQFQAGYDDLPTFQ). The helical transmembrane segment at 93–113 (FFVISMSLVSGYIVLSLPISV) threads the bilayer. Over 114–125 (VTIVRPLAAAPR) the chain is Cytoplasmic. The chain crosses the membrane as a helical span at residues 126-146 (LLLLVLDTAVMGLTMAAASSA). Topologically, residues 147 to 204 (AAISYVAHNGNQNTNWLPICQQFGDFCQKTSGGCGLFLCRRRVFHDPGCPLRSRSQRH) are extracellular.

It belongs to the Casparian strip membrane proteins (CASP) family. Homodimer and heterodimers.

It localises to the cell membrane. Regulates membrane-cell wall junctions and localized cell wall deposition. Required for establishment of the Casparian strip membrane domain (CSD) and the subsequent formation of Casparian strips, a cell wall modification of the root endodermis that determines an apoplastic barrier between the intraorganismal apoplasm and the extraorganismal apoplasm and prevents lateral diffusion. In Raphanus sativus (Radish), this protein is Casparian strip membrane protein 3.